A 146-amino-acid polypeptide reads, in one-letter code: Hemoglobin subunit beta (146 aa).

The residue at position 1 (valine 1) is an N-acetylvaline. A Globin domain is found at 2–146; that stretch reads HLTDAEKAAI…VASALAHKYH (145 aa). A heme b-binding site is contributed by histidine 63. At lysine 82 the chain carries N6-acetyllysine. Histidine 92 lines the heme b pocket. An S-nitrosocysteine modification is found at cysteine 93. The residue at position 144 (lysine 144) is an N6-acetyllysine.

The protein belongs to the globin family. Heterotetramer of two alpha chains and two beta chains. In terms of tissue distribution, red blood cells.

In terms of biological role, involved in oxygen transport from the lung to the various peripheral tissues. This chain is Hemoglobin subunit beta (HBB), found in Microtus xanthognathus (Yellow-cheeked vole).